The following is a 252-amino-acid chain: 2-succinyl-6-hydroxy-2,4-cyclohexadiene-1-carboxylate synthase (252 aa).

It belongs to the AB hydrolase superfamily. MenH family. Monomer.

The enzyme catalyses 5-enolpyruvoyl-6-hydroxy-2-succinyl-cyclohex-3-ene-1-carboxylate = (1R,6R)-6-hydroxy-2-succinyl-cyclohexa-2,4-diene-1-carboxylate + pyruvate. Its pathway is quinol/quinone metabolism; 1,4-dihydroxy-2-naphthoate biosynthesis; 1,4-dihydroxy-2-naphthoate from chorismate: step 3/7. It functions in the pathway quinol/quinone metabolism; menaquinone biosynthesis. Functionally, catalyzes a proton abstraction reaction that results in 2,5-elimination of pyruvate from 2-succinyl-5-enolpyruvyl-6-hydroxy-3-cyclohexene-1-carboxylate (SEPHCHC) and the formation of 2-succinyl-6-hydroxy-2,4-cyclohexadiene-1-carboxylate (SHCHC). This chain is 2-succinyl-6-hydroxy-2,4-cyclohexadiene-1-carboxylate synthase, found in Escherichia coli (strain SE11).